Here is a 209-residue protein sequence, read N- to C-terminus: Cerebral peptide 1 (209 aa).

An N-terminal signal peptide occupies residues 1 to 20 (MLLAKISVVVLLLAIDGTSS). Residues 21–39 (SESTDNVVLSSSPDSQKAA) are compositionally biased toward polar residues. Positions 21–43 (SESTDNVVLSSSPDSQKAATSRH) are cleaved as a propeptide — connecting peptide 1. The interval 21-56 (SESTDNVVLSSSPDSQKAATSRHKRAPGWGKRSSLN) is disordered. Residue W49 is modified to Tryptophan amide. Positions 53 to 77 (SSLNDEDLFADSDSAQELLDSVAAL) are cleaved as a propeptide — connecting peptide 2. W83 and W105 each carry tryptophan amide. The disordered stretch occupies residues 98-169 (EAKRAPGWGK…APGWGKRSGG (72 aa)). Positions 109–122 (GQEIDVDEDGSEQE) are cleaved as a propeptide — connecting peptide 4. 6 positions are modified to tryptophan amide: W128, W135, W142, W149, W156, and W163. Residues 167–191 (SGGDYCETLEKMVDAYIYKAVEVDS) constitute a propeptide, connecting peptide 5. A disulfide bridge connects residues C172 and C197.

As to quaternary structure, homodimer; disulfide-linked. Cerebral peptide 1 is expressed in the cerebral, pedal and buccal ganglia and B1 and B2 neurons. APGW-amide is expressed in buccal ganglia and several neurons.

It localises to the secreted. Its function is as follows. May function as a peptide transmitter. The chain is Cerebral peptide 1 from Aplysia californica (California sea hare).